A 519-amino-acid polypeptide reads, in one-letter code: Probable DNA ligase (519 aa).

ATP is bound at residue E221. K223 (N6-AMP-lysine intermediate) is an active-site residue. Positions 228, 243, 272, 312, 384, and 390 each coordinate ATP.

Belongs to the ATP-dependent DNA ligase family. Mg(2+) is required as a cofactor.

It carries out the reaction ATP + (deoxyribonucleotide)n-3'-hydroxyl + 5'-phospho-(deoxyribonucleotide)m = (deoxyribonucleotide)n+m + AMP + diphosphate.. Its function is as follows. DNA ligase that seals nicks in double-stranded DNA during DNA replication, DNA recombination and DNA repair. This Mycolicibacterium paratuberculosis (strain ATCC BAA-968 / K-10) (Mycobacterium paratuberculosis) protein is Probable DNA ligase.